Reading from the N-terminus, the 286-residue chain is ATP synthase gamma chain (286 aa).

It belongs to the ATPase gamma chain family. F-type ATPases have 2 components, CF(1) - the catalytic core - and CF(0) - the membrane proton channel. CF(1) has five subunits: alpha(3), beta(3), gamma(1), delta(1), epsilon(1). CF(0) has three main subunits: a, b and c.

The protein resides in the cell inner membrane. Functionally, produces ATP from ADP in the presence of a proton gradient across the membrane. The gamma chain is believed to be important in regulating ATPase activity and the flow of protons through the CF(0) complex. The sequence is that of ATP synthase gamma chain from Marinomonas sp. (strain MWYL1).